A 216-amino-acid polypeptide reads, in one-letter code: MDDSEKDFNLKVVLVSFKQCLTDKGEVLLDHYIAGWKGLVRFLNSLGAVFSFISKDVVAKLQIMERLRSSPQSEHYASLQSMVAYEVSNKLVDMDHRSHPRHPHSGCRTVLRLHRALHWLQLFLDGLRTSSEDARTSTLCSEAYNATLANYHSWIVRQAVTVAFCALPSRKVFLEAMNMESTEQAVEMLGEALPFIEHVYDISQKLYAEHSLLDLP.

D56, K60, R108, R112, and H152 together coordinate an N-acylsphingoid base 1-phosphate.

The protein belongs to the GLTP family.

The protein localises to the cytoplasm. Its subcellular location is the cytosol. It localises to the golgi apparatus. The protein resides in the trans-Golgi network membrane. It is found in the cell membrane. The protein localises to the endosome membrane. Its subcellular location is the nucleus outer membrane. The enzyme catalyses N-(hexadecanoyl)-sphing-4-enine-1-phosphate(in) = N-(hexadecanoyl)-sphing-4-enine-1-phosphate(out). The catalysed reaction is N-(9Z-octadecenoyl)-sphing-4-enine-1-phosphate(in) = N-(9Z-octadecenoyl)-sphing-4-enine-1-phosphate(out). Its function is as follows. Mediates the intracellular transfer of ceramide-1-phosphate (C1P) between organelle membranes and the cell membrane. Required for normal structure of the Golgi stacks. Can bind phosphoceramides with a variety of aliphatic chains, but has a preference for lipids with saturated C16:0 or monounsaturated C18:1 aliphatic chains, and is inefficient with phosphoceramides containing lignoceryl (C24:0). Plays a role in the regulation of the cellular levels of ceramide-1-phosphate, and thereby contributes to the regulation of phospholipase PLA2G4A activity and the release of arachidonic acid. Has no activity with galactosylceramide, lactosylceramide, sphingomyelin, phosphatidylcholine, phosphatidic acid and ceramide. C1P transfer is stimulated by phosphatidylserine in C1P source vesicles. Regulates autophagy, inflammasome mediated IL1B and IL18 processing, and pyroptosis, but not apoptosis. The chain is Ceramide-1-phosphate transfer protein from Mus musculus (Mouse).